The following is a 514-amino-acid chain: MTTTKRPIALLILDGWGYRENTHMNAIFHAKTPVLDRLNAQYPHGLISGSGLDVGLPDGQMGNSEVGHINLGSGRIVYQELTRISKAISDHEFETNPALCDAVDSAINAGGAVHIMGLLSPGGVHSHEEHIEAMCRMAVARGATKVYLHAFLDGRDTPPRSAKASLSHFDDLFTTLGHGRVASIIGRYFAMDRDNRWDRVSQAYELITQGKAKFQYDNAVTALEAAYARDENDEFVSSSAITDVDGKVATLQDGDALIFMNFRADRARQITRSFIHPDFDGFERAVVPKMHFVTLTEYAGDITAPIAYPSENLVNTLGEVLQNRGRTQLRISETEKYAHVTFFFNGGKEEPFEGEDRILINSPKVATYDLQPEMSSTELTDKLVAAIESTKYDVIICNYPNGDMVGHTGNFDAAVKACEAVDTCIGRVVEALAKVGGECIITADHGNAEQMTDETTGQAHTAHTSELVPFIFVGRDATIDKGGKLSDVAPTILQLIGETIPAEMTGKPLIHIKE.

Asp-14 and Ser-64 together coordinate Mn(2+). Residue Ser-64 is the Phosphoserine intermediate of the active site. Substrate is bound by residues His-125, 155–156 (RD), Arg-187, Arg-193, 263–266 (RADR), and Lys-336. The Mn(2+) site is built by Asp-403, His-407, Asp-444, His-445, and His-463.

This sequence belongs to the BPG-independent phosphoglycerate mutase family. Monomer. Mn(2+) is required as a cofactor.

The enzyme catalyses (2R)-2-phosphoglycerate = (2R)-3-phosphoglycerate. The protein operates within carbohydrate degradation; glycolysis; pyruvate from D-glyceraldehyde 3-phosphate: step 3/5. Catalyzes the interconversion of 2-phosphoglycerate and 3-phosphoglycerate. The polypeptide is 2,3-bisphosphoglycerate-independent phosphoglycerate mutase (Shewanella putrefaciens (strain CN-32 / ATCC BAA-453)).